Consider the following 520-residue polypeptide: 1,4-alpha-glucan branching enzyme TTHA1902 (520 aa).

Glu184 acts as the Nucleophile in catalysis. 2 residues coordinate substrate: Arg265 and Gly282. The active-site Proton donor is Asp353. 3 residues coordinate substrate: Trp404, Asp460, and Gln469.

Belongs to the glycosyl hydrolase 57 family.

The catalysed reaction is Transfers a segment of a (1-&gt;4)-alpha-D-glucan chain to a primary hydroxy group in a similar glucan chain.. The protein operates within glycan biosynthesis; glycogen biosynthesis. Its function is as follows. Catalyzes the formation of branch points in alpha-glucans by cleavage of an alpha-1,4 glycosidic bond and subsequent transfer of the cleaved-off oligosaccharide to a new alpha-1,6 position. The branch chain-length distribution of the reaction products shows degree of polymerization (DP) of 3 to 13, with two local maxima at DP 7 and DP 11. Exhibits an alpha-retaining catalytic mechanism. Is involved in glycogen biosynthesis. Shows a secondary activity, i.e. the hydrolysis of the substrate, being 4% of the total activity. Can use amylose as substrate but not alpha-1,4-linked oligosaccharides of 2-7 glucose residues, beta-cyclodextrin, 6-O-glucosyl-beta-cyclodextrin and 6-O-maltosyl-beta-cyclodextrin. Is not able to branch amylopectin further, it only hydrolyzes amylopectin. Thus, displays preference for linear and long substrates (amylose) over branched structures (amylopectin). This chain is 1,4-alpha-glucan branching enzyme TTHA1902, found in Thermus thermophilus (strain ATCC 27634 / DSM 579 / HB8).